Consider the following 271-residue polypeptide: Putative phosphoenolpyruvate synthase regulatory protein (271 aa).

Residue 151–158 (GVSRSGKT) coordinates ADP.

Belongs to the pyruvate, phosphate/water dikinase regulatory protein family. PSRP subfamily.

It carries out the reaction [pyruvate, water dikinase] + ADP = [pyruvate, water dikinase]-phosphate + AMP + H(+). The catalysed reaction is [pyruvate, water dikinase]-phosphate + phosphate + H(+) = [pyruvate, water dikinase] + diphosphate. Its function is as follows. Bifunctional serine/threonine kinase and phosphorylase involved in the regulation of the phosphoenolpyruvate synthase (PEPS) by catalyzing its phosphorylation/dephosphorylation. This chain is Putative phosphoenolpyruvate synthase regulatory protein, found in Burkholderia ambifaria (strain MC40-6).